Here is a 437-residue protein sequence, read N- to C-terminus: Vacuolar cation/proton exchanger 2 (437 aa).

A disordered region spans residues Met-1 to Ala-29. The Cytoplasmic segment spans residues Met-1–Arg-65. The helical transmembrane segment at Val-66–Leu-86 threads the bilayer. Residues His-87 to Tyr-88 are Extracellular-facing. The helical transmembrane segment at Leu-89–Ala-109 threads the bilayer. Residues Glu-110–Thr-126 lie on the Cytoplasmic side of the membrane. The chain crosses the membrane as a helical span at residues Ile-127 to Ala-147. The segment at Gly-136–Val-171 is cation selection. Residues Leu-148–Leu-161 lie on the Extracellular side of the membrane. Residues Gly-162–Val-182 form a helical membrane-spanning segment. Residues His-183–Ser-194 are Cytoplasmic-facing. The chain crosses the membrane as a helical span at residues Ala-195 to Leu-215. The Extracellular portion of the chain corresponds to His-216–Glu-228. Residues Val-229–Phe-249 traverse the membrane as a helical segment. Residues Gln-250–Gly-281 are Cytoplasmic-facing. The helical transmembrane segment at Glu-282 to Val-302 threads the bilayer. Topologically, residues Asp-303–Glu-310 are extracellular. Residues Ser-311–Ala-331 traverse the membrane as a helical segment. A cation selection region spans residues Gly-328–Val-363. The Cytoplasmic portion of the chain corresponds to Glu-332–Ala-352. A helical transmembrane segment spans residues Ile-353 to Ile-373. Residues Met-374 to Asp-379 are Extracellular-facing. A helical transmembrane segment spans residues Leu-380–Met-400. The Cytoplasmic portion of the chain corresponds to Leu-401 to Tyr-408. A helical transmembrane segment spans residues Phe-409 to Val-429. Residues Asp-430 to Lys-437 lie on the Extracellular side of the membrane.

The protein belongs to the Ca(2+):cation antiporter (CaCA) (TC 2.A.19) family. Cation/proton exchanger (CAX) subfamily. In terms of tissue distribution, expressed in roots and shoots.

Its subcellular location is the vacuole membrane. Functionally, vacuolar cation/proton exchanger (CAX). Translocates Ca(2+) and other metal ions into vacuoles using the proton gradient formed by H(+)-ATPase and H(+)-pyrophosphatase. The polypeptide is Vacuolar cation/proton exchanger 2 (CAX2) (Oryza sativa subsp. japonica (Rice)).